The primary structure comprises 485 residues: Glycogen synthase (485 aa).

An ADP-alpha-D-glucose-binding site is contributed by Lys-15.

This sequence belongs to the glycosyltransferase 1 family. Bacterial/plant glycogen synthase subfamily.

It catalyses the reaction [(1-&gt;4)-alpha-D-glucosyl](n) + ADP-alpha-D-glucose = [(1-&gt;4)-alpha-D-glucosyl](n+1) + ADP + H(+). It participates in glycan biosynthesis; glycogen biosynthesis. Functionally, synthesizes alpha-1,4-glucan chains using ADP-glucose. In Francisella philomiragia subsp. philomiragia (strain ATCC 25017 / CCUG 19701 / FSC 153 / O#319-036), this protein is Glycogen synthase.